Here is a 157-residue protein sequence, read N- to C-terminus: Endoribonuclease YbeY (157 aa).

Residues His113, His117, and His123 each coordinate Zn(2+).

The protein belongs to the endoribonuclease YbeY family. Zn(2+) serves as cofactor.

The protein localises to the cytoplasm. Single strand-specific metallo-endoribonuclease involved in late-stage 70S ribosome quality control and in maturation of the 3' terminus of the 16S rRNA. This Ehrlichia ruminantium (strain Welgevonden) protein is Endoribonuclease YbeY.